Consider the following 415-residue polypeptide: YDG domain-containing protein At5g47160 (415 aa).

The disordered stretch occupies residues 163–186 (KKLSNASRLRANAHRPTQHKDERR). The YDG domain occupies 262–407 (GSVPGIKVGD…NILFKFKLRR (146 aa)).

It is found in the nucleus. This is YDG domain-containing protein At5g47160 from Arabidopsis thaliana (Mouse-ear cress).